Consider the following 251-residue polypeptide: Coproheme decarboxylase (251 aa).

Fe-coproporphyrin III contacts are provided by residues arginine 133, 147–151, histidine 174, glutamine 187, and serine 225; that span reads YPMSK. Residue tyrosine 147 is part of the active site.

The protein belongs to the ChdC family. Type 1 subfamily. It depends on Fe-coproporphyrin III as a cofactor.

It catalyses the reaction Fe-coproporphyrin III + 2 H2O2 + 2 H(+) = heme b + 2 CO2 + 4 H2O. The enzyme catalyses Fe-coproporphyrin III + H2O2 + H(+) = harderoheme III + CO2 + 2 H2O. It carries out the reaction harderoheme III + H2O2 + H(+) = heme b + CO2 + 2 H2O. Its pathway is porphyrin-containing compound metabolism; protoheme biosynthesis. Involved in coproporphyrin-dependent heme b biosynthesis. Catalyzes the decarboxylation of Fe-coproporphyrin III (coproheme) to heme b (protoheme IX), the last step of the pathway. The reaction occurs in a stepwise manner with a three-propionate intermediate. The sequence is that of Coproheme decarboxylase from Listeria monocytogenes serotype 4a (strain HCC23).